A 1823-amino-acid polypeptide reads, in one-letter code: AF4/FMR2 family member lilli (1823 aa).

Residues 1 to 41 (MAQQQQQQHQQQQHHQQQQQQLQQQQQLLQYNNNSYNLNYN) show a composition bias toward low complexity. Disordered stretches follow at residues 1–87 (MAQQ…DPEI), 126–305 (GFGS…ENHI), 422–544 (QQLT…KKKY), 570–626 (AGPG…WHLS), 686–712 (DSRHMDDDEDEQADQQHQQQQQRYGVG), 753–1057 (PKNQ…DIPT), 1071–1287 (AAAQ…LKPR), 1322–1350 (ARQHHHQPERLKTQQNGHLSSRSAEGART), 1413–1448 (FMLKQELPARRRKRSSSSSSSPYKEKKRKKEKAEQL), 1480–1531 (ENSA…AIAS), 1547–1567 (TCSEAVQTTPPPAAPPPAPRL), and 1715–1744 (GNTPSSISPSNSVGSQGSGSNTPPGKIVPQ). A compositionally biased stretch (basic and acidic residues) spans 53 to 79 (REKYERQQGIQSDDRETSLFGEPRRLN). 3 stretches are compositionally biased toward low complexity: residues 126-147 (GFGSATTSFSSSSSASASSSAS), 156-174 (QQQQQQQQQQQQQHYQQQQ), and 205-249 (PSSS…TSSP). Over residues 426–438 (PTPPKASPTPPVI) the composition is skewed to pro residues. Threonine 434 carries the phosphothreonine modification. Residues 441-454 (LKTEKNHSLEKQDS) are compositionally biased toward basic and acidic residues. The segment covering 456-466 (LENDLELSESD) has biased composition (acidic residues). 2 positions are modified to phosphoserine: serine 463 and serine 465. The segment covering 475-531 (SAGNSSNSSESDSSESGSEASSKGDPQQQQQQQQQHLLHQQQQHQQQQLLLQQQQQQ) has biased composition (low complexity). Positions 582–598 (AAGGVGSGSGSTGGGSS) are enriched in gly residues. Residues 599 to 612 (SSGMGTMSSSNSSN) are compositionally biased toward low complexity. The span at 764 to 785 (SDSGSGSSGSGSSSSDSAGGSS) shows a compositional bias: low complexity. Polar residues predominate over residues 818-827 (HKAQPNSVTL). The span at 839-849 (PRQKKPRKKKM) shows a compositional bias: basic residues. 2 positions are modified to phosphoserine: serine 859 and serine 860. Composition is skewed to low complexity over residues 877-906 (AATAAAAAANAAAASVMPVAAAAAAAAAPA), 917-947 (QAQQQQQQLQLQQQQQQSGNLSSASASSSQA), 962-979 (GTASSSSSSGTAATVAAG), 1002-1057 (AAMA…DIPT), and 1102-1161 (NSSN…QLLQ). The a.T hook DNA-binding region spans 908 to 920 (KKGRGRPRKQAQQ). Phosphoserine occurs at positions 939 and 941. Residues 1172–1181 (TLKQSAQQRL) show a composition bias toward polar residues. 2 stretches are compositionally biased toward low complexity: residues 1182 to 1203 (SSSDCSSSASSDSSSNSSASSS) and 1253 to 1280 (QQQQQQQQQQQQQQQQQQQQQQQQQQQQ). The span at 1334-1344 (TQQNGHLSSRS) shows a compositional bias: polar residues. Polar residues predominate over residues 1480-1496 (ENSANASPNKLQQQNAR). Serine 1486 bears the Phosphoserine mark. Residues 1497-1531 (QLPLSQSQLQHQHQHQHQLQQQQSQSTATGHAIAS) show a composition bias toward low complexity. Over residues 1555-1565 (TPPPAAPPPAP) the composition is skewed to pro residues. The span at 1715–1735 (GNTPSSISPSNSVGSQGSGSN) shows a compositional bias: low complexity.

The protein belongs to the AF4 family.

Its subcellular location is the nucleus. Its function is as follows. Has a role in transcriptional regulation. Acts in parallel with the Ras/MAPK and the PI3K/PKB pathways in the control of cell identity and cellular growth. Essential for regulation of the cytoskeleton and cell growth but not for cell proliferation or growth rate. Required specifically for the microtubule-based basal transport of lipid droplets. Plays a partially redundant function downstream of Raf in cell fate specification in the developing eye. Pair-rule protein that regulates embryonic cellularization, gastrulation and segmentation. The chain is AF4/FMR2 family member lilli from Drosophila virilis (Fruit fly).